A 2199-amino-acid chain; its full sequence is DNA polymerase epsilon catalytic subunit A (2199 aa).

Zn(2+)-binding residues include cysteine 2069, cysteine 2072, cysteine 2104, and cysteine 2107. The segment at 2069 to 2107 (CKQCGVHQDFDLCLHEHLWPTRDDMGTLVFSDGWSCSSC) adopts a CysA-type zinc-finger fold. The [4Fe-4S] cluster site is built by cysteine 2138, cysteine 2141, cysteine 2153, and cysteine 2155. The CysB motif motif lies at 2138 to 2155 (CSKCKTVKQWSLKERCSC).

It belongs to the DNA polymerase type-B family. In terms of assembly, heterotetramer. Consists of 4 subunits: pol2, dpb2, dpb3 and dpb4. The cofactor is [4Fe-4S] cluster.

The protein localises to the nucleus. The catalysed reaction is DNA(n) + a 2'-deoxyribonucleoside 5'-triphosphate = DNA(n+1) + diphosphate. Functionally, DNA polymerase II participates in chromosomal DNA replication. In Schizosaccharomyces pombe (strain 972 / ATCC 24843) (Fission yeast), this protein is DNA polymerase epsilon catalytic subunit A (pol2).